We begin with the raw amino-acid sequence, 199 residues long: Calcium-binding protein CAST (199 aa).

The span at 1-13 (MGSVQDENKDEFK) shows a compositional bias: basic and acidic residues. A disordered region spans residues 1–31 (MGSVQDENKDEFKQSLTRGKLKPSSSSSFRL). EF-hand domains follow at residues 36 to 71 (LNSIRLRRIFDVFDRNHDCLISVEELSQALNLLGLD), 75 to 110 (SEIESMVKLHIKPENTGLRFEDFETLHRSLNDVFFG), 125 to 160 (QDESDLKEAFDVFDENGDGFISAKELQVVLEKLGLP), and 163 to 198 (SEIDRVEMMISSVEQDHDGRVDFFEFKDMMRTVIVP). Ca(2+)-binding residues include Asp49, Asn51, Asp53, and Glu60. Asp138, Asn140, Asp142, Glu149, Asp178, Asp180, Arg182, and Glu187 together coordinate Ca(2+).

In terms of biological role, not known. Probably binds 3 calcium ions. The chain is Calcium-binding protein CAST from Solanum tuberosum (Potato).